Consider the following 211-residue polypeptide: Large ribosomal subunit protein mL48 (211 aa).

The transit peptide at 1–27 (MSGTLGKVLGVWTNTVSKQGFSLLRFR) directs the protein to the mitochondrion. K198 is subject to N6-succinyllysine.

The protein belongs to the mitochondrion-specific ribosomal protein mL48 family. Component of the mitochondrial ribosome large subunit (39S) which comprises a 16S rRNA and about 50 distinct proteins. Interacts with OXA1L.

The protein localises to the mitochondrion. This chain is Large ribosomal subunit protein mL48 (Mrpl48), found in Mus musculus (Mouse).